The sequence spans 100 residues: UPF0473 protein Lm4b_01511 (100 aa).

The protein belongs to the UPF0473 family.

The polypeptide is UPF0473 protein Lm4b_01511 (Listeria monocytogenes serotype 4b (strain CLIP80459)).